A 121-amino-acid chain; its full sequence is Inner membrane protein YhaH (121 aa).

Residues 1–23 lie on the Periplasmic side of the membrane; it reads MDWYLKVLKNYVGFRGRARRKEY. The chain crosses the membrane as a helical span at residues 24–44; that stretch reads WMFILVNIIFTFVLGLLDKML. At 45 to 49 the chain is on the cytoplasmic side; the sequence is GWQRA. A helical membrane pass occupies residues 50-70; the sequence is GGEGILTTIYGILVFLPWWAV. Residues 71–80 are Periplasmic-facing; that stretch reads QFRRLHDTDR. The chain crosses the membrane as a helical span at residues 81-101; it reads SAWWALLFLIPFIGWLIIIVF. At 102–121 the chain is on the cytoplasmic side; sequence NCQAGTPGENRFGPDPKLEP.

The protein to E.coli YhaI.

It localises to the cell inner membrane. The polypeptide is Inner membrane protein YhaH (yhaH) (Escherichia coli O157:H7).